A 208-amino-acid chain; its full sequence is MAAMMNNERSSSNKLQVDAENPAAVGDELDLAARANWLRAAVLGANDGLVSTASLMLGVGAVKAEARAMVISGFAGLLAGACSMAIGEFVSVCSQRDVELAQLERDGKRGGEEEKALPSPAQAAAASAMAFSVGAVVPLLAAGFIVNYRLRIAVVVAVASVALAAFGCVGAVLGRAAVARSSARVVLGGWAAMGITFGLMRLFKASGI.

At 1-41 (MAAMMNNERSSSNKLQVDAENPAAVGDELDLAARANWLRAA) the chain is on the cytoplasmic side. A helical transmembrane segment spans residues 42–62 (VLGANDGLVSTASLMLGVGAV). Over 63–69 (KAEARAM) the chain is Vacuolar. Residues 70–90 (VISGFAGLLAGACSMAIGEFV) form a helical membrane-spanning segment. Residues 91 to 125 (SVCSQRDVELAQLERDGKRGGEEEKALPSPAQAAA) lie on the Cytoplasmic side of the membrane. Residues 126 to 146 (ASAMAFSVGAVVPLLAAGFIV) traverse the membrane as a helical segment. Topologically, residues 147 to 151 (NYRLR) are vacuolar. Residues 152–172 (IAVVVAVASVALAAFGCVGAV) form a helical membrane-spanning segment. The Cytoplasmic segment spans residues 173 to 184 (LGRAAVARSSAR). The helical transmembrane segment at 185–205 (VVLGGWAAMGITFGLMRLFKA) threads the bilayer. Over 206–208 (SGI) the chain is Vacuolar.

It belongs to the CCC1 family.

It is found in the vacuole membrane. The enzyme catalyses Fe(2+)(in) = Fe(2+)(out). Probable vacuolar iron transporter that may be involved in the regulation of iron distribution throughout the plant. This is Vacuolar iron transporter homolog 5 from Oryza sativa subsp. japonica (Rice).